The sequence spans 294 residues: 33 kDa chaperonin (294 aa).

2 cysteine pairs are disulfide-bonded: C230-C232 and C263-C266.

Belongs to the HSP33 family. Under oxidizing conditions two disulfide bonds are formed involving the reactive cysteines. Under reducing conditions zinc is bound to the reactive cysteines and the protein is inactive.

The protein localises to the cytoplasm. In terms of biological role, redox regulated molecular chaperone. Protects both thermally unfolding and oxidatively damaged proteins from irreversible aggregation. Plays an important role in the bacterial defense system toward oxidative stress. The protein is 33 kDa chaperonin of Chromobacterium violaceum (strain ATCC 12472 / DSM 30191 / JCM 1249 / CCUG 213 / NBRC 12614 / NCIMB 9131 / NCTC 9757 / MK).